A 108-amino-acid chain; its full sequence is Colipase B (108 aa).

The first 13 residues, 1–13 (LALLLVALAVAYA), serve as a signal peptide directing secretion. Positions 14 to 18 (VPDPR) are cleaved as a propeptide — enterostatin, activation peptide. Intrachain disulfides connect C30–C41, C36–C52, C40–C74, C62–C82, and C76–C100. Residue W65 coordinates taurodeoxycholate.

Belongs to the colipase family. In terms of assembly, forms a 1:1 stoichiometric complex with pancreatic lipase. As to expression, expressed by the pancreas.

Its subcellular location is the secreted. Colipase is a cofactor of pancreatic lipase. It allows the lipase to anchor itself to the lipid-water interface. Without colipase the enzyme is washed off by bile salts, which have an inhibitory effect on the lipase. In terms of biological role, enterostatin has a biological activity as a satiety signal. In Equus caballus (Horse), this protein is Colipase B (CLPS2).